The chain runs to 239 residues: ATP-dependent dethiobiotin synthetase BioD (239 aa).

15–20 (EIGKTF) contacts ATP. Thr-19 contacts Mg(2+). Residue Lys-40 is part of the active site. Residues Asp-57, 118 to 121 (EGVG), and 178 to 179 (NH) contribute to the ATP site. Mg(2+)-binding residues include Asp-57 and Glu-118.

It belongs to the dethiobiotin synthetase family. Homodimer. The cofactor is Mg(2+).

It localises to the cytoplasm. It catalyses the reaction (7R,8S)-7,8-diammoniononanoate + CO2 + ATP = (4R,5S)-dethiobiotin + ADP + phosphate + 3 H(+). The protein operates within cofactor biosynthesis; biotin biosynthesis; biotin from 7,8-diaminononanoate: step 1/2. In terms of biological role, catalyzes a mechanistically unusual reaction, the ATP-dependent insertion of CO2 between the N7 and N8 nitrogen atoms of 7,8-diaminopelargonic acid (DAPA, also called 7,8-diammoniononanoate) to form a ureido ring. The polypeptide is ATP-dependent dethiobiotin synthetase BioD (Burkholderia cenocepacia (strain HI2424)).